We begin with the raw amino-acid sequence, 504 residues long: Glycerol kinase (504 aa).

ADP is bound at residue Thr-14. The ATP site is built by Thr-14, Thr-15, and Ser-16. Thr-14 is a sn-glycerol 3-phosphate binding site. An ADP-binding site is contributed by Arg-18. Sn-glycerol 3-phosphate-binding residues include Arg-84, Glu-85, Tyr-136, and Asp-246. Glycerol contacts are provided by Arg-84, Glu-85, Tyr-136, Asp-246, and Gln-247. 2 residues coordinate ADP: Thr-268 and Gly-311. 4 residues coordinate ATP: Thr-268, Gly-311, Gln-315, and Gly-412. ADP is bound by residues Gly-412 and Asn-416.

This sequence belongs to the FGGY kinase family.

It catalyses the reaction glycerol + ATP = sn-glycerol 3-phosphate + ADP + H(+). It functions in the pathway polyol metabolism; glycerol degradation via glycerol kinase pathway; sn-glycerol 3-phosphate from glycerol: step 1/1. With respect to regulation, inhibited by fructose 1,6-bisphosphate (FBP). In terms of biological role, key enzyme in the regulation of glycerol uptake and metabolism. Catalyzes the phosphorylation of glycerol to yield sn-glycerol 3-phosphate. The sequence is that of Glycerol kinase from Aliivibrio salmonicida (strain LFI1238) (Vibrio salmonicida (strain LFI1238)).